The primary structure comprises 336 residues: Anthranilate phosphoribosyltransferase (336 aa).

5-phospho-alpha-D-ribose 1-diphosphate is bound by residues Gly-79, 82–83, Thr-87, 89–92, 107–115, and Ser-119; these read GD, NIST, and KHGNRSVSS. Gly-79 lines the anthranilate pocket. Ser-91 is a Mg(2+) binding site. Asn-110 serves as a coordination point for anthranilate. Position 165 (Arg-165) interacts with anthranilate. Residues Asp-224 and Glu-225 each contribute to the Mg(2+) site.

Belongs to the anthranilate phosphoribosyltransferase family. In terms of assembly, homodimer. Mg(2+) serves as cofactor.

It carries out the reaction N-(5-phospho-beta-D-ribosyl)anthranilate + diphosphate = 5-phospho-alpha-D-ribose 1-diphosphate + anthranilate. Its pathway is amino-acid biosynthesis; L-tryptophan biosynthesis; L-tryptophan from chorismate: step 2/5. In terms of biological role, catalyzes the transfer of the phosphoribosyl group of 5-phosphorylribose-1-pyrophosphate (PRPP) to anthranilate to yield N-(5'-phosphoribosyl)-anthranilate (PRA). The polypeptide is Anthranilate phosphoribosyltransferase (Endomicrobium trichonymphae).